The primary structure comprises 116 residues: uncharacterized protein (116 aa).

Belongs to the BolA/IbaG family.

It localises to the mitochondrion. This is an uncharacterized protein from Schizosaccharomyces pombe (strain 972 / ATCC 24843) (Fission yeast).